Reading from the N-terminus, the 434-residue chain is Citrate-proton symporter (434 aa).

Topologically, residues 1 to 21 are cytoplasmic; sequence MAQHTPATSRAGTFGAILRVT. A helical membrane pass occupies residues 22–42; it reads SGNFLEQFDFFLFGFYATYIA. Residues 43 to 54 are Periplasmic-facing; it reads RTFFPAESEFAS. The chain crosses the membrane as a helical span at residues 55 to 75; that stretch reads LMLTFAVFGSGFLMRPVGAIV. Residues 76 to 87 lie on the Cytoplasmic side of the membrane; sequence LGAYIDRIGRRK. A helical membrane pass occupies residues 88 to 108; it reads GLMVTLAIMGCGTLLIALVPG. Topologically, residues 109-111 are periplasmic; that stretch reads YQT. The helical transmembrane segment at 112 to 132 threads the bilayer; sequence IGLAAPALVLLGRLLQGFSAG. Residues 133-164 lie on the Cytoplasmic side of the membrane; that stretch reads VELGGVSVYLSEIATPGNKGFYTSWQSASQQV. A helical membrane pass occupies residues 165–185; sequence AIVVAALIGYSLNITLGHDAI. Position 186 (Ser-186) is a topological domain, periplasmic. Residues 187-207 form a helical membrane-spanning segment; sequence EWGWRIPFFIGCMIIPLIFVL. Topologically, residues 208-238 are cytoplasmic; that stretch reads RRSLQETEAFLQRKHRPDTREIFATIAKNWR. The chain crosses the membrane as a helical span at residues 239–259; it reads IITAGTLLVAMTTTTFYFITV. Residues 260–276 are Periplasmic-facing; sequence YTPTYGRTVLNLSARDS. A helical membrane pass occupies residues 277-297; that stretch reads LIVTMLVGVSNFIWLPIGGAI. At 298 to 304 the chain is on the cytoplasmic side; the sequence is SDRIGRR. Residues 305-325 form a helical membrane-spanning segment; sequence AVLMGITLLALITTWPVMQWL. The Periplasmic portion of the chain corresponds to 326 to 335; the sequence is TAAPDFTRMT. Residues 336–356 form a helical membrane-spanning segment; it reads LVLLWFSFFFGMYNGAMVAAL. Over 357–366 the chain is Cytoplasmic; sequence TEVMPVYVRT. A helical membrane pass occupies residues 367-387; it reads VGFSLAFSLATAIFGGLTPAI. Topologically, residues 388–400 are periplasmic; it reads STALVKLTGDKSS. A helical membrane pass occupies residues 401–421; it reads PGWWLMCAALCGLAATAMLFV. Topologically, residues 422–434 are cytoplasmic; the sequence is RLSRGYIAAENKA.

This sequence belongs to the major facilitator superfamily. Metabolite:H+ Symporter (MHS) family (TC 2.A.1.6) family.

It is found in the cell inner membrane. In terms of biological role, uptake of citrate across the boundary membrane with the concomitant transport of protons into the cell (symport system). The chain is Citrate-proton symporter (citA) from Salmonella typhi.